The chain runs to 334 residues: Glycerol-1-phosphate dehydrogenase [NAD(P)+] (334 aa).

NAD(+)-binding positions include 77-81 (GRPID) and 99-102 (TTAS). Position 104 (Asp-104) interacts with substrate. Ser-108 contacts NAD(+). Substrate is bound at residue Asp-147. Asp-147 and His-225 together coordinate Zn(2+). His-229 is a binding site for substrate. His-246 provides a ligand contact to Zn(2+).

Belongs to the glycerol-1-phosphate dehydrogenase family. Zn(2+) is required as a cofactor.

Its subcellular location is the cytoplasm. The enzyme catalyses sn-glycerol 1-phosphate + NAD(+) = dihydroxyacetone phosphate + NADH + H(+). The catalysed reaction is sn-glycerol 1-phosphate + NADP(+) = dihydroxyacetone phosphate + NADPH + H(+). It participates in membrane lipid metabolism; glycerophospholipid metabolism. Its function is as follows. Catalyzes the NAD(P)H-dependent reduction of dihydroxyacetonephosphate (DHAP or glycerone phosphate) to glycerol 1-phosphate (G1P). The G1P thus generated is used as the glycerophosphate backbone of phospholipids in the cellular membranes of Archaea. In Methanococcus maripaludis (strain C6 / ATCC BAA-1332), this protein is Glycerol-1-phosphate dehydrogenase [NAD(P)+].